Consider the following 296-residue polypeptide: 4-hydroxy-tetrahydrodipicolinate synthase (296 aa).

Thr49 contributes to the pyruvate binding site. Tyr137 functions as the Proton donor/acceptor in the catalytic mechanism. Lys165 functions as the Schiff-base intermediate with substrate in the catalytic mechanism. Ile208 lines the pyruvate pocket.

It belongs to the DapA family. As to quaternary structure, homotetramer; dimer of dimers.

It is found in the cytoplasm. The catalysed reaction is L-aspartate 4-semialdehyde + pyruvate = (2S,4S)-4-hydroxy-2,3,4,5-tetrahydrodipicolinate + H2O + H(+). It functions in the pathway amino-acid biosynthesis; L-lysine biosynthesis via DAP pathway; (S)-tetrahydrodipicolinate from L-aspartate: step 3/4. Its function is as follows. Catalyzes the condensation of (S)-aspartate-beta-semialdehyde [(S)-ASA] and pyruvate to 4-hydroxy-tetrahydrodipicolinate (HTPA). The sequence is that of 4-hydroxy-tetrahydrodipicolinate synthase from Ehrlichia canis (strain Jake).